The primary structure comprises 791 residues: Biofilm architecture maintenance protein MbaA (791 aa).

An N-terminal signal peptide occupies residues 1–23; the sequence is MKLNHRILLLIAPVILLSAAASS. Residues 24–259 are Periplasmic-facing; sequence YIIYTSQKNA…NAQLHSIQRE (236 aa). The chain crosses the membrane as a helical span at residues 260–280; that stretch reads LLLSFGVSALVTVLMLLLLLY. One can recognise an HAMP domain in the interval 281–333; sequence RHVINPILHLDKQLEEVENNQRKNIEKLNTDDEIGRLSSRFYAMYSELHSTYQ. The Cytoplasmic segment spans residues 281–791; that stretch reads RHVINPILHL…FTEPSQSECR (511 aa). In terms of domain architecture, GGDEF spans 368 to 509; it reads QHIWVMYIDL…GKNQVAYYSQ (142 aa). The region spanning 518 to 769 is the EAL domain; that stretch reads RNNIERALRL…EISPWLHASN (252 aa).

It localises to the cell inner membrane. In terms of biological role, plays an essential role in the maintenance and the formation of the three-dimensional structure of the biofilms at the later stages of their development. Absence of mbaA promotes the accumulation of larger amount of biomass on the surfaces at later stage of development, results in the overproduction of an extracellular polymeric substance that accumulates in the matrix of biofilms. This yields biofilms lacking the typical structure consisting of pillars of cells separated by fluid filled channels. The chain is Biofilm architecture maintenance protein MbaA (mbaA) from Vibrio cholerae serotype O1 (strain ATCC 39315 / El Tor Inaba N16961).